The sequence spans 1456 residues: Sterol 3-beta-glucosyltransferase (1456 aa).

Basic and acidic residues predominate over residues 1-12 (MASQDRGSDRTS). Residues 1 to 229 (MASQDRGSDR…RSPAAAATGE (229 aa)) form a disordered region. Residues 13 to 22 (RRLTKKRKDG) are compositionally biased toward basic residues. A compositionally biased stretch (basic and acidic residues) spans 23-48 (KKPMRDVSLDMPERFKDGDDAHEDVT). 2 stretches are compositionally biased toward polar residues: residues 54–63 (HTMSMNQSIF) and 109–123 (RLST…SGQT). In terms of domain architecture, GRAM 1 spans 236–283 (KRIQHIFEFAQEEEVISEYPCWLLQSILLQGYMYITQKHICFYAYIPK). Residues 287–384 (DVSKTGYLSK…WVKSIQKVIF (98 aa)) enclose the PH domain. Disordered regions lie at residues 500–612 (LSPL…TASA) and 631–691 (NAFS…TRLS). Over residues 510-523 (RSSMSDISVRSSVD) the composition is skewed to low complexity. Basic and acidic residues-rich tracts occupy residues 524–536 (ANRK…RSMD), 544–557 (WSLE…EAHR), and 571–584 (RVGD…RATD). 2 stretches are compositionally biased toward polar residues: residues 585 to 612 (SDSA…TASA) and 631 to 650 (NAFS…TRSS). Residues 774 to 840 (DNFREHFAFR…KDIENVNKEK (67 aa)) form the GRAM 2 domain. Positions 966, 967, 969, 1269, 1271, 1284, 1287, 1288, 1289, 1308, and 1309 each coordinate UDP-alpha-D-glucose.

This sequence belongs to the glycosyltransferase 28 family.

Its subcellular location is the cytoplasm. The protein localises to the preautophagosomal structure membrane. It carries out the reaction a sterol + UDP-alpha-D-glucose = a sterol 3-beta-D-glucoside + UDP + H(+). The catalysed reaction is ergosterol + UDP-alpha-D-glucose = ergosteryl 3-beta-D-glucoside + UDP + H(+). Functionally, sterol glycosyltransferase responsible for the glycosylation of ergosterol to form ergosterol-glucoside. This is Sterol 3-beta-glucosyltransferase from Leptosphaeria maculans (Blackleg fungus).